Reading from the N-terminus, the 365-residue chain is Geissoschizine synthase (365 aa).

Cys-51 provides a ligand contact to Zn(2+). Asn-52 contributes to the NADP(+) binding site. His-73, Glu-74, Cys-104, Cys-107, Cys-110, Cys-118, and Cys-169 together coordinate Zn(2+). NADP(+) contacts are provided by Leu-195, Gly-197, Leu-198, Ser-217, Thr-218, Ser-219, Lys-222, Arg-262, Val-281, Ala-283, Ser-305, Thr-307, and Arg-352.

The protein belongs to the zinc-containing alcohol dehydrogenase family. Class-III subfamily. Homodimer. Requires Zn(2+) as cofactor. As to expression, mainly expressed in roots and, to a lower level, in leaves.

The enzyme catalyses (19E)-geissoschizine + NADP(+) = 4,21-dehydrogeissoschizine + NADPH. It functions in the pathway alkaloid biosynthesis; ajmaline biosynthesis. Functionally, alcohol dehydrogenase involved in the biosynthesis of ajmaline-type monoterpenoid indole alkaloids (MIAs) natural products, important plant-derived pharmaceuticals used in the therapy of heart disorders. Catalyzes iminium reduction on 4,21-dehydrogeissoschizine to produce 19E-geissoschizine, precursor of vomilenine, an intermediate chemical in the biosynthesis of ajmaline. The polypeptide is Geissoschizine synthase (Rauvolfia serpentina (Serpentine wood)).